The sequence spans 437 residues: Serine--tRNA ligase (437 aa).

Position 240–242 (240–242 (TAE)) interacts with L-serine. An ATP-binding site is contributed by 271–273 (RAE). Glu294 is a binding site for L-serine. 358-361 (EISS) lines the ATP pocket. Residue Ser394 participates in L-serine binding.

The protein belongs to the class-II aminoacyl-tRNA synthetase family. Type-1 seryl-tRNA synthetase subfamily. In terms of assembly, homodimer. The tRNA molecule binds across the dimer.

Its subcellular location is the cytoplasm. It carries out the reaction tRNA(Ser) + L-serine + ATP = L-seryl-tRNA(Ser) + AMP + diphosphate + H(+). The enzyme catalyses tRNA(Sec) + L-serine + ATP = L-seryl-tRNA(Sec) + AMP + diphosphate + H(+). The protein operates within aminoacyl-tRNA biosynthesis; selenocysteinyl-tRNA(Sec) biosynthesis; L-seryl-tRNA(Sec) from L-serine and tRNA(Sec): step 1/1. Catalyzes the attachment of serine to tRNA(Ser). Is also able to aminoacylate tRNA(Sec) with serine, to form the misacylated tRNA L-seryl-tRNA(Sec), which will be further converted into selenocysteinyl-tRNA(Sec). The polypeptide is Serine--tRNA ligase (Methylobacterium nodulans (strain LMG 21967 / CNCM I-2342 / ORS 2060)).